The following is a 364-amino-acid chain: Mitoferrin-2 (364 aa).

The span at 1-17 (MELEGRGAGGVAGGPAA) shows a compositional bias: gly residues. Disordered regions lie at residues 1-28 (MELE…ESAL) and 40-60 (GAGG…PDSG). Positions 18–27 (GPGRSPGESA) are enriched in low complexity. Solcar repeat units lie at residues 70–158 (ATVT…LKKT), 168–252 (NSHI…LQEH), and 259–352 (YNPS…FKYL). 6 consecutive transmembrane segments (helical) span residues 72–91 (VTTH…CVMY), 133–152 (GLNV…FACY), 170–189 (HIAN…AAMN), 227–246 (SYTT…FMTY), 261–280 (PSSH…AATT), and 327–346 (GVQA…WSVY).

This sequence belongs to the mitochondrial carrier (TC 2.A.29) family. Ubiquitous. Expressed in placenta, lung, kidney, pancreas, liver, brain, skeletal muscle and heart.

It is found in the mitochondrion inner membrane. The enzyme catalyses Fe(2+)(in) = Fe(2+)(out). Mitochondrial iron transporter that mediates iron uptake. Probably required for heme synthesis of hemoproteins and Fe-S cluster assembly in non-erythroid cells. The polypeptide is Mitoferrin-2 (SLC25A28) (Homo sapiens (Human)).